The primary structure comprises 166 residues: MSNGQLVSQVTVGHDKPLDREKVCPMLLRVFVANNRHNPMSEYNSRNGGSVPPSELQMHTWMDCSLRELTSLIKEVNPDARRKGTTFDFAIVQADRGSPRYILRDVGNTTNGERGIDDNKTLQQCKFEVGDFVDVAISLPSQGRRFNNREQGDRFDHRQRQRSPIR.

Residues 143 to 166 (GRRFNNREQGDRFDHRQRQRSPIR) are disordered. Residues 147 to 158 (NNREQGDRFDHR) show a composition bias toward basic and acidic residues.

The protein belongs to the SAP18 family. As to quaternary structure, interacts with SIN3 and histone deacetylase.

In terms of biological role, acts in transcription repression. Involved in the tethering of the SIN3 complex to core histone proteins. The sequence is that of Probable histone deacetylase complex subunit SAP18 from Caenorhabditis elegans.